A 92-amino-acid chain; its full sequence is C-C motif chemokine 4 (92 aa).

The N-terminal stretch at 1-23 (MKLCVSALSLLLLVAAFCAPGFS) is a signal peptide. Cystine bridges form between Cys-34-Cys-58 and Cys-35-Cys-74.

Belongs to the intercrine beta (chemokine CC) family. Homodimer.

It localises to the secreted. Its function is as follows. Monokine with inflammatory and chemokinetic properties. The sequence is that of C-C motif chemokine 4 (Ccl4) from Mus musculus (Mouse).